Reading from the N-terminus, the 555-residue chain is Glutamine--tRNA ligase (555 aa).

The 'HIGH' region signature appears at 34–44 (PEPNGYLHIGH). ATP-binding positions include 35–37 (EPN) and 41–47 (HIGHAKS). L-glutamine-binding residues include Asp-67 and Tyr-212. ATP-binding positions include Thr-231, 261–262 (RL), and 269–271 (MSK). Positions 268-272 (VMSKR) match the 'KMSKS' region motif.

This sequence belongs to the class-I aminoacyl-tRNA synthetase family. In terms of assembly, monomer.

It is found in the cytoplasm. It carries out the reaction tRNA(Gln) + L-glutamine + ATP = L-glutaminyl-tRNA(Gln) + AMP + diphosphate. The sequence is that of Glutamine--tRNA ligase from Proteus mirabilis (strain HI4320).